An 888-amino-acid chain; its full sequence is MSPQLKSLDEEGDKSARRPTRKQTSRAACPQDGHRAQSSRKDPAKGSPRPGSSRKKQMEHGSYHKGLQGQKPRKVERSLQGRKKDRRTSLKEQRASPKKEREALRKEAGKQLRKPRSTSLGSSVSTGDSLSEEELAQILEQVEEKKKLITTVRNKPWPMAKKLRELREAQAFVEKYEGALGKGKGKHLYAYRMMMAKKWVKFKRDFDNFKTQCIPWEMKIKDIESHFGSSVASYFIFLRWMYGVNLVLFGLIFGLVIIPEVLMGMPYGSIPRKTVPRAEEERAMDFSVLWDFEGYIKYSALFYGYYNNQRTIGWLRYRLPMAYFMVGVSVFGYSLMIVIRSMASNTQGSTSEGDSDSFTFSFKMFTSWDYLIGNSETADNKYVSITTSFKESIVDEQESNKEGNIHLTRFLRVLANFLILCCLCGSGYLIYFVVKRSQEFSKMQNVSWYERNEVEIVMSLLGMFCPPLFETIAALENYHPRTGLKWQLGRIFALFLGNLYTFLLALMDDVHLKLSNEEKIKNITHWTLFNYYNSSGGNESVPRPPPHPADVPRGSCWETAVGIEFMRLTVSDMLVTYLTILVGDFLRACFVRFMNHCWCWDLEAGFPSYAEFDISGNVLGLIFNQGMIWMGSFYAPGLVGINVLRLLTSMYFQCWAVMSSNVPHERVFKASRSNNFYMGLLLLVLFLSLLPVAYTVMSLPPSFDCGPFSGKNRMYDVLHETIENDFPKFLGKIFAFLANPGLIIPAILLMFLAIYYLNSVSKSLSRANAQLRKKIQALREVEKNHKSIKGKAIVTYSEDTIKNSSKNATQIHLTKEEPTSHSSSQIQTLDKKAQGPHTSSTEGGASPSTSWHHVGSQPPRGRRDSGQPQSQTYTGRSPSGKRTQRPHN.

The interval 1 to 128 is disordered; sequence MSPQLKSLDE…SLGSSVSTGD (128 aa). The Cytoplasmic portion of the chain corresponds to 1–228; sequence MSPQLKSLDE…KIKDIESHFG (228 aa). 3 stretches are compositionally biased toward basic and acidic residues: residues 7–16, 32–44, and 87–110; these read SLDEEGDKSA, DGHR…KDPA, and RTSL…EAGK. Residues 117-128 are compositionally biased toward polar residues; the sequence is STSLGSSVSTGD. The helical transmembrane segment at 229–266 threads the bilayer; sequence SSVASYFIFLRWMYGVNLVLFGLIFGLVIIPEVLMGMP. Residues 267 to 317 lie on the Extracellular side of the membrane; that stretch reads YGSIPRKTVPRAEEERAMDFSVLWDFEGYIKYSALFYGYYNNQRTIGWLRY. Residues 318–350 traverse the membrane as a helical segment; that stretch reads RLPMAYFMVGVSVFGYSLMIVIRSMASNTQGST. Residues 351 to 406 lie on the Cytoplasmic side of the membrane; that stretch reads SEGDSDSFTFSFKMFTSWDYLIGNSETADNKYVSITTSFKESIVDEQESNKEGNIH. Residues 407 to 437 form a helical membrane-spanning segment; sequence LTRFLRVLANFLILCCLCGSGYLIYFVVKRS. Over 438–447 the chain is Extracellular; sequence QEFSKMQNVS. The chain crosses the membrane as a helical span at residues 448-475; that stretch reads WYERNEVEIVMSLLGMFCPPLFETIAAL. At 476–479 the chain is on the cytoplasmic side; it reads ENYH. A helical membrane pass occupies residues 480 to 514; it reads PRTGLKWQLGRIFALFLGNLYTFLLALMDDVHLKL. The Extracellular segment spans residues 515–556; that stretch reads SNEEKIKNITHWTLFNYYNSSGGNESVPRPPPHPADVPRGSC. A helical transmembrane segment spans residues 557-594; it reads WETAVGIEFMRLTVSDMLVTYLTILVGDFLRACFVRFM. Over 595 to 613 the chain is Cytoplasmic; the sequence is NHCWCWDLEAGFPSYAEFD. Residues 614–634 form a helical membrane-spanning segment; sequence ISGNVLGLIFNQGMIWMGSFY. Residues 635–637 lie on the Extracellular side of the membrane; that stretch reads APG. The chain crosses the membrane as a helical span at residues 638 to 660; it reads LVGINVLRLLTSMYFQCWAVMSS. Topologically, residues 661-674 are cytoplasmic; the sequence is NVPHERVFKASRSN. The helical transmembrane segment at 675–698 threads the bilayer; sequence NFYMGLLLLVLFLSLLPVAYTVMS. Residues 699 to 741 are Extracellular-facing; that stretch reads LPPSFDCGPFSGKNRMYDVLHETIENDFPKFLGKIFAFLANPG. The chain crosses the membrane as a helical span at residues 742–775; the sequence is LIIPAILLMFLAIYYLNSVSKSLSRANAQLRKKI. The Cytoplasmic segment spans residues 776–888; sequence QALREVEKNH…SGKRTQRPHN (113 aa). The interval 813–888 is disordered; that stretch reads LTKEEPTSHS…SGKRTQRPHN (76 aa). Polar residues-rich tracts occupy residues 836–851 and 866–881; these read PHTS…STSW and GQPQ…PSGK.

The protein belongs to the TMC family. As to quaternary structure, forms the MET channel composed of TMC dimer (TMC1 or TMC2), TMIE, TOMT, CIB (CIB2 or CIB3), LHFPL5 and PDH15. The interaction of TMC1 and TMC2 with TOMT is required for the transportation of TMC1/2 into the stereocilia of hair cells. Interacts (via N-terminus) with both isoforms CD1 and CD3 of PCDH15. Can form a heterodimer with TMC1, TMC5 or TMC7. In terms of tissue distribution, inner ear and testis. Expressed in cochlear inner and outer hair cells and vestibular organ hair cells.

It is found in the cell membrane. The enzyme catalyses Ca(2+)(in) = Ca(2+)(out). In terms of biological role, pore-forming subunit of the mechanotransducer (MET) non-selective cation channel complex located at the tips of stereocilia of cochlear hair cells and that mediates sensory transduction in the auditory system. The MET complex is composed of two dimeric pore-forming ion-conducting transmembrane TMC (TMC1 or TMC2) subunits, several auxiliary proteins including LHFPL5, TMIE, CIB2/3 and TOMT, the tip-link PCDH15, and possibly the PIEZO subunits. MET channel is activated by tension in the tip-link extending from the side wall of one stereocilium to the tip of the adjacent shorter stereocilium, where the channel is located. TMC2 MET channel is highly permeable to calcium and likely transports monovalent cations. Also involved in vestibular hair cell transduction current of the mammalian inner ear. This chain is Transmembrane channel-like protein 2, found in Mus musculus (Mouse).